Consider the following 88-residue polypeptide: MIAKSIKAEIVKDNARSALDTGSPEVQVGLLTGRINELMPHFKTHAKDHHGRRGLLRMVSRRRKLLDYLKSKDASRYVALIAKLGLRK.

It belongs to the universal ribosomal protein uS15 family. Part of the 30S ribosomal subunit. Forms a bridge to the 50S subunit in the 70S ribosome, contacting the 23S rRNA.

Functionally, one of the primary rRNA binding proteins, it binds directly to 16S rRNA where it helps nucleate assembly of the platform of the 30S subunit by binding and bridging several RNA helices of the 16S rRNA. Its function is as follows. Forms an intersubunit bridge (bridge B4) with the 23S rRNA of the 50S subunit in the ribosome. The polypeptide is Small ribosomal subunit protein uS15 (Polaromonas naphthalenivorans (strain CJ2)).